The chain runs to 94 residues: Large ribosomal subunit protein bL25 (94 aa).

It belongs to the bacterial ribosomal protein bL25 family. Part of the 50S ribosomal subunit; part of the 5S rRNA/L5/L18/L25 subcomplex. Contacts the 5S rRNA. Binds to the 5S rRNA independently of L5 and L18.

Functionally, this is one of the proteins that binds to the 5S RNA in the ribosome where it forms part of the central protuberance. The sequence is that of Large ribosomal subunit protein bL25 from Photorhabdus laumondii subsp. laumondii (strain DSM 15139 / CIP 105565 / TT01) (Photorhabdus luminescens subsp. laumondii).